The chain runs to 162 residues: Phosphopantetheine adenylyltransferase (162 aa).

Residue Thr10 coordinates substrate. ATP contacts are provided by residues 10-11 (TF) and His18. Substrate contacts are provided by Lys42, Met74, and Arg88. Residues 89 to 91 (GLR), Glu99, and 124 to 130 (YAFLSST) contribute to the ATP site.

The protein belongs to the bacterial CoaD family. In terms of assembly, homohexamer. Mg(2+) serves as cofactor.

It localises to the cytoplasm. The enzyme catalyses (R)-4'-phosphopantetheine + ATP + H(+) = 3'-dephospho-CoA + diphosphate. Its pathway is cofactor biosynthesis; coenzyme A biosynthesis; CoA from (R)-pantothenate: step 4/5. Its function is as follows. Reversibly transfers an adenylyl group from ATP to 4'-phosphopantetheine, yielding dephospho-CoA (dPCoA) and pyrophosphate. The protein is Phosphopantetheine adenylyltransferase of Aliivibrio salmonicida (strain LFI1238) (Vibrio salmonicida (strain LFI1238)).